Consider the following 146-residue polypeptide: ATP synthase epsilon chain (146 aa).

The disordered stretch occupies residues 103-122 (SAKKRAEQHMQEAKEKHNER).

Belongs to the ATPase epsilon chain family. F-type ATPases have 2 components, CF(1) - the catalytic core - and CF(0) - the membrane proton channel. CF(1) has five subunits: alpha(3), beta(3), gamma(1), delta(1), epsilon(1). CF(0) has three main subunits: a, b and c.

It is found in the cell membrane. Produces ATP from ADP in the presence of a proton gradient across the membrane. The protein is ATP synthase epsilon chain of Lactobacillus johnsonii (strain CNCM I-12250 / La1 / NCC 533).